Reading from the N-terminus, the 375-residue chain is Alcohol dehydrogenase B (375 aa).

C40, H62, C92, C95, C98, C106, and C169 together coordinate Zn(2+).

This sequence belongs to the zinc-containing alcohol dehydrogenase family. Requires Zn(2+) as cofactor.

The protein resides in the cytoplasm. It carries out the reaction a primary alcohol + NAD(+) = an aldehyde + NADH + H(+). The catalysed reaction is a secondary alcohol + NAD(+) = a ketone + NADH + H(+). This Mycobacterium bovis (strain ATCC BAA-935 / AF2122/97) protein is Alcohol dehydrogenase B (adhB).